The sequence spans 23 residues: Phallacidin proprotein 1 (23 aa).

A propeptide is located at residue Pro-1. The segment at residues Ala-2 to Pro-8 is a cross-link (cyclopeptide (Ala-Pro)). Residues Trp-3–Cys-7 constitute a cross-link (2'-cysteinyl-6'-hydroxytryptophan sulfoxide (Trp-Cys)). Residues Cys-9 to Lys-23 constitute a propeptide that is removed on maturation.

Belongs to the MSDIN fungal toxin family. Post-translationally, processed by the macrocyclase-peptidase enzyme POPB to yield a toxic cyclic heptapeptide. POPB first removes 10 residues from the N-terminus. Conformational trapping of the remaining peptide forces the enzyme to release this intermediate rather than proceed to macrocyclization. The enzyme rebinds the remaining peptide in a different conformation and catalyzes macrocyclization of the N-terminal 7 residues.

Major toxin that belongs to the bicyclic heptapeptides called phallotoxins. Although structurally related to amatoxins, phallotoxins have a different mode of action, which is the stabilization of F-actin. Phallotoxins are poisonous when administered parenterally, but not orally because of poor absorption. In Amanita phalloides (Death cap), this protein is Phallacidin proprotein 1.